The following is a 141-amino-acid chain: Globin, extracellular monomeric (141 aa).

A Globin domain is found at 1–141 (ECDALQRFKV…LGVITGAIHD (141 aa)). Cysteines 2 and 131 form a disulfide. Histidine 94 is a binding site for heme b.

Belongs to the globin family. In terms of assembly, the giant hemoglobins of worms are formed of a monomeric subunit and a disulfide-bonded trimer. This subunit is monomeric.

Its subcellular location is the secreted. This is Globin, extracellular monomeric from Tubifex tubifex (Sludge worm).